The sequence spans 515 residues: Lysine--tRNA ligase (515 aa).

Positions 425 and 432 each coordinate Mg(2+).

The protein belongs to the class-II aminoacyl-tRNA synthetase family. Homodimer. Requires Mg(2+) as cofactor.

The protein localises to the cytoplasm. The catalysed reaction is tRNA(Lys) + L-lysine + ATP = L-lysyl-tRNA(Lys) + AMP + diphosphate. The sequence is that of Lysine--tRNA ligase from Cupriavidus metallidurans (strain ATCC 43123 / DSM 2839 / NBRC 102507 / CH34) (Ralstonia metallidurans).